A 466-amino-acid chain; its full sequence is Ribosomal protein uS12 methylthiotransferase RimO (466 aa).

An MTTase N-terminal domain is found at 16–127; sequence PKVAFAHLGC…IVDVLQRVEA (112 aa). Residues Cys25, Cys61, Cys90, Cys165, Cys169, and Cys172 each contribute to the [4Fe-4S] cluster site. Residues 151 to 380 form the Radical SAM core domain; that stretch reads TTDQAVAYLK…MALQQPIAAE (230 aa). The TRAM domain maps to 383–454; sequence QRWVGKTVDV…IYDLTGHIVG (72 aa).

The protein belongs to the methylthiotransferase family. RimO subfamily. It depends on [4Fe-4S] cluster as a cofactor.

It is found in the cytoplasm. The catalysed reaction is L-aspartate(89)-[ribosomal protein uS12]-hydrogen + (sulfur carrier)-SH + AH2 + 2 S-adenosyl-L-methionine = 3-methylsulfanyl-L-aspartate(89)-[ribosomal protein uS12]-hydrogen + (sulfur carrier)-H + 5'-deoxyadenosine + L-methionine + A + S-adenosyl-L-homocysteine + 2 H(+). In terms of biological role, catalyzes the methylthiolation of an aspartic acid residue of ribosomal protein uS12. The chain is Ribosomal protein uS12 methylthiotransferase RimO from Synechococcus sp. (strain CC9902).